Reading from the N-terminus, the 255-residue chain is 3-oxoacyl-[acyl-carrier-protein] reductase MabA (255 aa).

NADP(+)-binding positions include 32–35 (NRGI), arginine 55, 69–70 (DV), glycine 98, tyrosine 161, lysine 165, isoleucine 194, and arginine 205. Residue tyrosine 161 is the Proton acceptor of the active site.

The protein belongs to the short-chain dehydrogenases/reductases (SDR) family. In terms of assembly, homotetramer.

The protein localises to the secreted. It localises to the cell wall. The catalysed reaction is a (3R)-hydroxyacyl-[ACP] + NADP(+) = a 3-oxoacyl-[ACP] + NADPH + H(+). It carries out the reaction a (3R)-3-hydroxyacyl-CoA + NADP(+) = a 3-oxoacyl-CoA + NADPH + H(+). The enzyme catalyses (3R)-3-hydroxybutanoyl-CoA + NADP(+) = acetoacetyl-CoA + NADPH + H(+). It catalyses the reaction (3R)-hydroxyoctanoyl-CoA + NADP(+) = 3-oxooctanoyl-CoA + NADPH + H(+). It functions in the pathway lipid metabolism; mycolic acid biosynthesis. Functionally, part of the mycobacterial fatty acid elongation system FAS-II, which is involved in mycolic acid biosynthesis. Catalyzes the NADPH-dependent reduction of beta-ketoacyl derivatives, the second step of the FAS-II elongation cycle. Has a preference for longer substrates. Can use CoA derivatives as substrates in vitro. The protein is 3-oxoacyl-[acyl-carrier-protein] reductase MabA of Mycolicibacterium smegmatis (strain ATCC 700084 / mc(2)155) (Mycobacterium smegmatis).